The primary structure comprises 610 residues: Elongation factor 4 (610 aa).

The tr-type G domain occupies 11-193 (QRIRNFSIVA…KIVQDIPAPT (183 aa)). GTP is bound by residues 23-28 (DHGKST) and 140-143 (NKVD).

The protein belongs to the TRAFAC class translation factor GTPase superfamily. Classic translation factor GTPase family. LepA subfamily.

The protein localises to the cell membrane. It carries out the reaction GTP + H2O = GDP + phosphate + H(+). In terms of biological role, required for accurate and efficient protein synthesis under certain stress conditions. May act as a fidelity factor of the translation reaction, by catalyzing a one-codon backward translocation of tRNAs on improperly translocated ribosomes. Back-translocation proceeds from a post-translocation (POST) complex to a pre-translocation (PRE) complex, thus giving elongation factor G a second chance to translocate the tRNAs correctly. Binds to ribosomes in a GTP-dependent manner. The polypeptide is Elongation factor 4 (Limosilactobacillus fermentum (strain NBRC 3956 / LMG 18251) (Lactobacillus fermentum)).